A 142-amino-acid polypeptide reads, in one-letter code: Hemoglobin subunit theta-1 (142 aa).

Positions 2-142 constitute a Globin domain; that stretch reads ALAAADRATV…VISALASDCR (141 aa). Heme b is bound by residues H59 and H88.

Belongs to the globin family.

In Equus caballus (Horse), this protein is Hemoglobin subunit theta-1 (HBQ1).